A 253-amino-acid chain; its full sequence is MDWHFQGTNDDREHTKRIIIEYLNRIKAGDDSAREEFILRFRPFILKLVYKATDRHVEPENSEEYSVALLAFNEAINAYDEEKHSNFLVFSEQVINRRLIDYKRKNHKNKMVYPFSYFENEDIKLERTLSDADGNNAIERLEFTDEIRLFKSELASFDITFKDLLSCTPKHRDSRELLINIAKKIASNDGLYEKLKKTKKLPTLELLKLAKVSRRTIERNKKYIIAVSLILRSNLEIFKEYAAGIQEKEVDLR.

The Polymerase core binding signature appears at 63-76 (EEYSVALLAFNEAI). The H-T-H motif DNA-binding region spans 203–222 (TLELLKLAKVSRRTIERNKK).

This sequence belongs to the sigma-70 factor family. SigI subfamily. In terms of assembly, interacts with RsgI6.

It is found in the cytoplasm. Negatively regulated by the anti-sigma-I factor RsgI6. Binding of the polysaccharide substrate to RsgI6 may lead to the release and activation of SigI6. Its function is as follows. Sigma factors are initiation factors that promote the attachment of RNA polymerase to specific initiation sites and are then released. This sigma factor is involved in regulation of cellulosomal genes via an external polysaccharide-sensing mechanism. Recognizes the predicted promoters associated with sigI6 itself, xyn11B, xyn10D, xyn10Z, xyn10Y, cel9V, cseP, sigI1, cipA, and rsgI5. This chain is RNA polymerase sigma factor SigI6, found in Acetivibrio thermocellus (strain ATCC 27405 / DSM 1237 / JCM 9322 / NBRC 103400 / NCIMB 10682 / NRRL B-4536 / VPI 7372) (Clostridium thermocellum).